Consider the following 427-residue polypeptide: Glucan 1,3-beta-glucosidase 2 (427 aa).

The N-terminal stretch at 1 to 17 (MLISTFIISSLLSIALA) is a signal peptide. Glutamate 217 (proton donor) is an active-site residue. Intrachain disulfides connect cysteine 299/cysteine 426 and cysteine 324/cysteine 355. Glutamate 316 functions as the Nucleophile in the catalytic mechanism.

Belongs to the glycosyl hydrolase 5 (cellulase A) family.

It localises to the secreted. The catalysed reaction is Successive hydrolysis of beta-D-glucose units from the non-reducing ends of (1-&gt;3)-beta-D-glucans, releasing alpha-glucose.. Beta-glucanases participate in the metabolism of beta-glucan, the main structural component of the cell wall. It could also function biosynthetically as a transglycosylase. This is Glucan 1,3-beta-glucosidase 2 (EXG2) from Wickerhamomyces anomalus (Yeast).